The chain runs to 240 residues: Uridylate kinase (240 aa).

Position 13-16 (13-16 (KASG)) interacts with ATP. The interval 21 to 26 (GSQGFG) is involved in allosteric activation by GTP. G55 provides a ligand contact to UMP. ATP-binding residues include G56 and R60. Residues D75 and 136 to 143 (TGNPFFTT) each bind UMP. Residues T163, Q164, Y169, and D172 each contribute to the ATP site.

This sequence belongs to the UMP kinase family. As to quaternary structure, homohexamer.

It localises to the cytoplasm. The catalysed reaction is UMP + ATP = UDP + ADP. Its pathway is pyrimidine metabolism; CTP biosynthesis via de novo pathway; UDP from UMP (UMPK route): step 1/1. With respect to regulation, allosterically activated by GTP. Inhibited by UTP. In terms of biological role, catalyzes the reversible phosphorylation of UMP to UDP. The sequence is that of Uridylate kinase from Sinorhizobium medicae (strain WSM419) (Ensifer medicae).